A 78-amino-acid polypeptide reads, in one-letter code: Delta-conotoxin-like Ai6.1 (78 aa).

Residues 1–22 form the signal peptide; the sequence is MKLTCVMIVAVLFLTAWTFATA. The propeptide occupies 23–49; sequence DDPRNGLGNLFSNAHHEMKNPEASKLN. 3 cysteine pairs are disulfide-bonded: Cys-53-Cys-68, Cys-60-Cys-72, and Cys-67-Cys-77.

Belongs to the conotoxin O1 superfamily. In terms of tissue distribution, expressed by the venom duct.

It is found in the secreted. In terms of biological role, delta-conotoxins bind to site 6 of voltage-gated sodium channels (Nav) and inhibit the inactivation process. The polypeptide is Delta-conotoxin-like Ai6.1 (Conus ammiralis (Admiral cone)).